We begin with the raw amino-acid sequence, 294 residues long: Cytidine deaminase (294 aa).

CMP/dCMP-type deaminase domains lie at 48-168 and 187-294; these read DDDA…FGPT and AETD…RVTF. 89–91 contacts substrate; that stretch reads NME. His-102 contributes to the Zn(2+) binding site. Glu-104 acts as the Proton donor in catalysis. The Zn(2+) site is built by Cys-129 and Cys-132.

This sequence belongs to the cytidine and deoxycytidylate deaminase family. As to quaternary structure, homodimer. Zn(2+) serves as cofactor.

It carries out the reaction cytidine + H2O + H(+) = uridine + NH4(+). It catalyses the reaction 2'-deoxycytidine + H2O + H(+) = 2'-deoxyuridine + NH4(+). Its function is as follows. This enzyme scavenges exogenous and endogenous cytidine and 2'-deoxycytidine for UMP synthesis. The chain is Cytidine deaminase from Yersinia pseudotuberculosis serotype O:1b (strain IP 31758).